The chain runs to 410 residues: Monoglucosyldiacylglycerol epimerase (410 aa).

Residues 1 to 14 (MAMAWLMGLGLALA) form the signal peptide. 2 helical membrane-spanning segments follow: residues 71-91 (ALVM…WQGF) and 96-116 (LILA…SAIA). The Proton acceptor role is filled by Y320. Residues 380 to 400 (IIVTINPITFIAFPVKEFFVS) form a helical membrane-spanning segment.

The protein belongs to the short-chain dehydrogenases/reductases (SDR) family.

Its subcellular location is the membrane. The catalysed reaction is a 1,2-diacyl-3-O-(beta-D-glucopyranosyl)-sn-glycerol = a 1,2-diacyl-3-O-(beta-D-galactosyl)-sn-glycerol. In terms of biological role, involved in the biosynthesis of galactolipids found in the photosynthetic membranes. Catalyzes the isomerization of monoglucosyldiacylglycerol (GlcDG) to yield monogalactosyldiacylglycerol (MGDG). This Synechocystis sp. (strain ATCC 27184 / PCC 6803 / Kazusa) protein is Monoglucosyldiacylglycerol epimerase.